Reading from the N-terminus, the 392-residue chain is GTPase Obg (392 aa).

In terms of domain architecture, Obg spans 1–159; that stretch reads MKFVDEAEIR…RNLKLELMLL (159 aa). The interval 121 to 146 is disordered; sequence GFHGLGNTRFKSSTNRAPRQKTNGTP. The span at 129-145 shows a compositional bias: polar residues; the sequence is RFKSSTNRAPRQKTNGT. The OBG-type G domain maps to 160-333; that stretch reads ADVGLLGMPN…LCNDVMDFIE (174 aa). GTP-binding positions include 166–173, 191–195, 213–216, 283–286, and 314–316; these read GMPNAGKS, FTTLV, DIPG, NKVD, and SAF. Residues Ser-173 and Thr-193 each contribute to the Mg(2+) site.

Belongs to the TRAFAC class OBG-HflX-like GTPase superfamily. OBG GTPase family. In terms of assembly, monomer. It depends on Mg(2+) as a cofactor.

It is found in the cytoplasm. Functionally, an essential GTPase which binds GTP, GDP and possibly (p)ppGpp with moderate affinity, with high nucleotide exchange rates and a fairly low GTP hydrolysis rate. Plays a role in control of the cell cycle, stress response, ribosome biogenesis and in those bacteria that undergo differentiation, in morphogenesis control. This is GTPase Obg from Alteromonas mediterranea (strain DSM 17117 / CIP 110805 / LMG 28347 / Deep ecotype).